We begin with the raw amino-acid sequence, 483 residues long: Glutamyl-tRNA(Gln) amidotransferase subunit A (483 aa).

Catalysis depends on charge relay system residues lysine 76 and serine 151. Serine 175 serves as the catalytic Acyl-ester intermediate.

The protein belongs to the amidase family. GatA subfamily. As to quaternary structure, heterotrimer of A, B and C subunits.

The enzyme catalyses L-glutamyl-tRNA(Gln) + L-glutamine + ATP + H2O = L-glutaminyl-tRNA(Gln) + L-glutamate + ADP + phosphate + H(+). Functionally, allows the formation of correctly charged Gln-tRNA(Gln) through the transamidation of misacylated Glu-tRNA(Gln) in organisms which lack glutaminyl-tRNA synthetase. The reaction takes place in the presence of glutamine and ATP through an activated gamma-phospho-Glu-tRNA(Gln). The polypeptide is Glutamyl-tRNA(Gln) amidotransferase subunit A (Nitrosospira multiformis (strain ATCC 25196 / NCIMB 11849 / C 71)).